A 38-amino-acid chain; its full sequence is Photosystem II reaction center protein L (38 aa).

Residues serine 17–phenylalanine 37 traverse the membrane as a helical segment.

The protein belongs to the PsbL family. PSII is composed of 1 copy each of membrane proteins PsbA, PsbB, PsbC, PsbD, PsbE, PsbF, PsbH, PsbI, PsbJ, PsbK, PsbL, PsbM, PsbT, PsbX, PsbY, PsbZ, Psb30/Ycf12, at least 3 peripheral proteins of the oxygen-evolving complex and a large number of cofactors. It forms dimeric complexes.

It is found in the plastid. Its subcellular location is the chloroplast thylakoid membrane. In terms of biological role, one of the components of the core complex of photosystem II (PSII). PSII is a light-driven water:plastoquinone oxidoreductase that uses light energy to abstract electrons from H(2)O, generating O(2) and a proton gradient subsequently used for ATP formation. It consists of a core antenna complex that captures photons, and an electron transfer chain that converts photonic excitation into a charge separation. This subunit is found at the monomer-monomer interface and is required for correct PSII assembly and/or dimerization. The polypeptide is Photosystem II reaction center protein L (Chlorokybus atmophyticus (Soil alga)).